Consider the following 462-residue polypeptide: tRNA modification GTPase MnmE (462 aa).

Arg27, Glu89, and Arg128 together coordinate (6S)-5-formyl-5,6,7,8-tetrahydrofolate. In terms of domain architecture, TrmE-type G spans 224–383 (GLATAIVGRP…LDERIAKLFF (160 aa)). Asn234 is a binding site for K(+). GTP-binding positions include 234–239 (NVGKSS), 253–259 (TDVAGTT), and 278–281 (DTAG). Position 238 (Ser238) interacts with Mg(2+). K(+) contacts are provided by Thr253, Val255, and Thr258. Position 259 (Thr259) interacts with Mg(2+). Lys462 contacts (6S)-5-formyl-5,6,7,8-tetrahydrofolate.

It belongs to the TRAFAC class TrmE-Era-EngA-EngB-Septin-like GTPase superfamily. TrmE GTPase family. In terms of assembly, homodimer. Heterotetramer of two MnmE and two MnmG subunits. It depends on K(+) as a cofactor.

It localises to the cytoplasm. Its function is as follows. Exhibits a very high intrinsic GTPase hydrolysis rate. Involved in the addition of a carboxymethylaminomethyl (cmnm) group at the wobble position (U34) of certain tRNAs, forming tRNA-cmnm(5)s(2)U34. The sequence is that of tRNA modification GTPase MnmE from Lacticaseibacillus paracasei (strain ATCC 334 / BCRC 17002 / CCUG 31169 / CIP 107868 / KCTC 3260 / NRRL B-441) (Lactobacillus paracasei).